Here is a 1216-residue protein sequence, read N- to C-terminus: Protein WWC3 (1216 aa).

Positions M1–A63 are disordered. Pro residues predominate over residues E21–P51. 2 WW domains span residues L59–D92 and D106–E139. Coiled-coil stretches lie at residues K164–E250 and D354–R468. Disordered stretches follow at residues V487–G508, G546–C612, and D634–T668. Residues P570 to P598 show a composition bias toward low complexity. The 126-residue stretch at S722–H847 folds into the C2 domain. The stretch at D885 to S936 forms a coiled coil. The tract at residues S1060–R1079 is interaction with PRKCZ. A coiled-coil region spans residues L1091–Y1160.

It belongs to the WWC family. In terms of assembly, forms homodimers and heterodimers with WWC1 and WWC2. Interacts with DLC1 and PRKCZ. Interacts (via WW domains) with LATS1 and LATS2.

The protein resides in the cytoplasm. The protein localises to the cytosol. Its function is as follows. Regulator of the Hippo signaling pathway, also known as the Salvador-Warts-Hippo (SWH) pathway. Enhances phosphorylation of LATS1 and YAP1 and negatively regulates cell proliferation and organ growth due to a suppression of the transcriptional activity of YAP1, the major effector of the Hippo pathway. The protein is Protein WWC3 of Homo sapiens (Human).